Here is a 65-residue protein sequence, read N- to C-terminus: Large ribosomal subunit protein bL35 (65 aa).

The protein belongs to the bacterial ribosomal protein bL35 family.

In Synechococcus sp. (strain CC9605), this protein is Large ribosomal subunit protein bL35.